The primary structure comprises 247 residues: Orotidine 5'-phosphate decarboxylase (247 aa).

Substrate contacts are provided by residues aspartate 22, lysine 44, 71–80, threonine 131, arginine 192, glutamine 201, glycine 221, and arginine 222; that span reads DLKFHDIPNT. Lysine 73 (proton donor) is an active-site residue.

Belongs to the OMP decarboxylase family. Type 1 subfamily. In terms of assembly, homodimer.

The catalysed reaction is orotidine 5'-phosphate + H(+) = UMP + CO2. It functions in the pathway pyrimidine metabolism; UMP biosynthesis via de novo pathway; UMP from orotate: step 2/2. In terms of biological role, catalyzes the decarboxylation of orotidine 5'-monophosphate (OMP) to uridine 5'-monophosphate (UMP). This chain is Orotidine 5'-phosphate decarboxylase, found in Pectobacterium atrosepticum (strain SCRI 1043 / ATCC BAA-672) (Erwinia carotovora subsp. atroseptica).